A 243-amino-acid chain; its full sequence is Protein IN2-1 (243 aa).

A disordered region spans residues 1–26 (MAAAAGPSSSVKESLPPALGSTSQPP). In terms of domain architecture, GST N-terminal spans 31–112 (GTTRLYICYF…YIDSNFDGPA (82 aa)). Glutathione is bound by residues Lys-70, Val-84, and 96–97 (ES). The GST C-terminal domain occupies 109–240 (DGPALLPEDA…FLLDLAKSHL (132 aa)).

The protein belongs to the GST superfamily. HSP26 family. Leaves and roots. It is more strongly induced in the leaves relative to the roots.

The chain is Protein IN2-1 (IN2-1) from Zea mays (Maize).